Consider the following 353-residue polypeptide: Membrane lipoprotein TmpC (353 aa).

The signal sequence occupies residues 1–20; sequence MREKWVRAFAGVFCAMLLIG. Residue C21 is the site of N-palmitoyl cysteine attachment. Residue C21 is the site of S-diacylglycerol cysteine attachment. Residue D47 coordinates guanosine. D47 contacts inosine. Residues 47 to 48 and F56 each bind adenosine; that span reads DS. The guanosine site is built by N57, D128, F206, G232, D258, and K280. Inosine is bound by residues N57 and D128. The adenosine site is built by D128, F206, G232, D258, and K280. Inosine-binding residues include G232, D258, and K280.

The protein belongs to the BMP lipoprotein family. Monomer.

It localises to the cell membrane. Binds purine nucleosides and may play a role in purine nucleoside uptake. May be part of an ABC-type nucleoside uptake system. Has highest affinity for guanosine, followed by inosine and adenosine. Has very low affinity for cytidine and does not bind thymidine. In Treponema pallidum (strain Nichols), this protein is Membrane lipoprotein TmpC (tmpC).